We begin with the raw amino-acid sequence, 67 residues long: ATP synthase protein 8 (67 aa).

The chain crosses the membrane as a helical span at residues 8–24 (TWFITILATILTLFIIM). Lys-54 carries the N6-acetyllysine; alternate modification. Lys-54 is subject to N6-succinyllysine; alternate. An N6-acetyllysine modification is found at Lys-57.

The protein belongs to the ATPase protein 8 family. F-type ATPases have 2 components, CF(1) - the catalytic core - and CF(0) - the membrane proton channel. Component of an ATP synthase complex composed of ATP5PB, ATP5MC1, ATP5F1E, ATP5PD, ATP5ME, ATP5PF, ATP5MF, MT-ATP6, MT-ATP8, ATP5F1A, ATP5F1B, ATP5F1D, ATP5F1C, ATP5PO, ATP5MG, ATP5MK and ATP5MJ. Interacts with PRICKLE3.

It localises to the mitochondrion membrane. In terms of biological role, mitochondrial membrane ATP synthase (F(1)F(0) ATP synthase or Complex V) produces ATP from ADP in the presence of a proton gradient across the membrane which is generated by electron transport complexes of the respiratory chain. F-type ATPases consist of two structural domains, F(1) - containing the extramembraneous catalytic core and F(0) - containing the membrane proton channel, linked together by a central stalk and a peripheral stalk. During catalysis, ATP synthesis in the catalytic domain of F(1) is coupled via a rotary mechanism of the central stalk subunits to proton translocation. Part of the complex F(0) domain. Minor subunit located with subunit a in the membrane. The polypeptide is ATP synthase protein 8 (MT-ATP8) (Artibeus jamaicensis (Jamaican fruit-eating bat)).